Reading from the N-terminus, the 223-residue chain is Uridylate kinase (223 aa).

9 to 10 (GS) serves as a coordination point for ATP. Residue Gly42 participates in UMP binding. ATP-binding residues include Gly43 and Arg47. Residues Asp64 and 112 to 118 (VSPGQTT) contribute to the UMP site. ATP-binding residues include Thr138, Tyr144, and Asp147.

The protein belongs to the UMP kinase family. As to quaternary structure, homohexamer.

Its subcellular location is the cytoplasm. The catalysed reaction is UMP + ATP = UDP + ADP. It functions in the pathway pyrimidine metabolism; CTP biosynthesis via de novo pathway; UDP from UMP (UMPK route): step 1/1. Its activity is regulated as follows. Inhibited by UTP. Its function is as follows. Catalyzes the reversible phosphorylation of UMP to UDP. This Methanothrix thermoacetophila (strain DSM 6194 / JCM 14653 / NBRC 101360 / PT) (Methanosaeta thermophila) protein is Uridylate kinase.